The chain runs to 163 residues: Thiol peroxidase (163 aa).

In terms of domain architecture, Thioredoxin spans 16–162; that stretch reads LQVGDTAHDF…YDAAIAAVKS (147 aa). The Cysteine sulfenic acid (-SOH) intermediate role is filled by cysteine 58. A disulfide bridge connects residues cysteine 58 and cysteine 92.

The protein belongs to the peroxiredoxin family. Tpx subfamily. In terms of assembly, homodimer.

It carries out the reaction a hydroperoxide + [thioredoxin]-dithiol = an alcohol + [thioredoxin]-disulfide + H2O. In terms of biological role, thiol-specific peroxidase that catalyzes the reduction of hydrogen peroxide and organic hydroperoxides to water and alcohols, respectively. Plays a role in cell protection against oxidative stress by detoxifying peroxides. The sequence is that of Thiol peroxidase from Streptococcus sanguinis.